The following is a 569-amino-acid chain: ATP-dependent RNA helicase dhh1 (569 aa).

Positions 1-16 are enriched in polar residues; the sequence is MSDQLADQLKATSLSS. Residues 1-39 form a disordered region; the sequence is MSDQLADQLKATSLSSGPEDWKKGLNLPARDTRQQTEDV. The short motif at 45–73 is the Q motif element; it reads LDWEDFIHDRDLLMGIFEAGFEKPSPIQE. In terms of domain architecture, Helicase ATP-binding spans 76 to 246; sequence IPVALTGRDI…DKNMTSPYEI (171 aa). An ATP-binding site is contributed by 89–96; sequence AKNGTGKT. Residues 194-197 carry the DEAD box motif; it reads DEAD. The Helicase C-terminal domain occupies 256-416; sequence GITQYYAFVE…PIPQTIDKSL (161 aa). The disordered stretch occupies residues 436–569; the sequence is AQQPQQQLQQ…GQPQGPLSAQ (134 aa). Residues 437 to 482 show a composition bias toward low complexity; it reads QQPQQQLQQSQRPQQSQQQQHFSTQTQPSNQLPPQQGNQQLGFNPQ. Over residues 495 to 520 the composition is skewed to polar residues; it reads GDWQGQNGRQNGTGASNNQPRPTNYQ. The segment covering 529–542 has biased composition (gly residues); that stretch reads SRGGRGRGFQGQGG. Residues 543–569 are compositionally biased toward low complexity; it reads RQNQNYGGQRGPRTQGQGQPQGPLSAQ.

Belongs to the DEAD box helicase family. DDX6/DHH1 subfamily.

Its subcellular location is the cytoplasm. It localises to the P-body. The enzyme catalyses ATP + H2O = ADP + phosphate + H(+). Its function is as follows. ATP-dependent RNA helicase involved in mRNA turnover, and more specifically in mRNA decapping. Is involved in G1/S DNA-damage checkpoint recovery, probably through the regulation of the translational status of a subset of mRNAs. May also have a role in translation and mRNA nuclear export. This is ATP-dependent RNA helicase dhh1 (drh-10) from Neurospora crassa (strain ATCC 24698 / 74-OR23-1A / CBS 708.71 / DSM 1257 / FGSC 987).